The sequence spans 329 residues: Probable endo-beta-1,4-glucanase B (329 aa).

The first 18 residues, 1–18 (MKFGSIVLIAAAAGSAVA), serve as a signal peptide directing secretion. N-linked (GlcNAc...) asparagine glycosylation is found at Asn-33 and Asn-96. The active-site Proton donor is the Glu-156. Glu-263 acts as the Nucleophile in catalysis.

The protein belongs to the glycosyl hydrolase 5 (cellulase A) family.

It localises to the secreted. It catalyses the reaction Endohydrolysis of (1-&gt;4)-beta-D-glucosidic linkages in cellulose, lichenin and cereal beta-D-glucans.. Functionally, has endoglucanase activity on substrates containing beta-1,4 glycosidic bonds, like in carboxymethylcellulose (CMC), hydroxyethylcellulose (HEC) and beta-glucan. Involved in the degradation of complex natural cellulosic substrates. The sequence is that of Probable endo-beta-1,4-glucanase B (eglB) from Neosartorya fischeri (strain ATCC 1020 / DSM 3700 / CBS 544.65 / FGSC A1164 / JCM 1740 / NRRL 181 / WB 181) (Aspergillus fischerianus).